Here is a 332-residue protein sequence, read N- to C-terminus: Phosphate acyltransferase (332 aa).

This sequence belongs to the PlsX family. Homodimer. Probably interacts with PlsY.

It is found in the cytoplasm. It carries out the reaction a fatty acyl-[ACP] + phosphate = an acyl phosphate + holo-[ACP]. Its pathway is lipid metabolism; phospholipid metabolism. Its function is as follows. Catalyzes the reversible formation of acyl-phosphate (acyl-PO(4)) from acyl-[acyl-carrier-protein] (acyl-ACP). This enzyme utilizes acyl-ACP as fatty acyl donor, but not acyl-CoA. This Bacillus pumilus (strain SAFR-032) protein is Phosphate acyltransferase.